Here is an 868-residue protein sequence, read N- to C-terminus: Dolichyl-phosphooligosaccharide-protein glycotransferase 3 (868 aa).

Residues 1 to 16 lie on the Cytoplasmic side of the membrane; the sequence is MQNAESWFKKYWHLSV. The chain crosses the membrane as a helical span at residues 17–36; sequence LVIAALISVKLRILNPWNSV. Residues 37–101 lie on the Extracellular side of the membrane; that stretch reads FTWTVRLGGN…IAGIIFSATS (65 aa). A DXD motif 1 motif is present at residues 45–47; sequence GND. Asp-47 serves as a coordination point for Mn(2+). Residue His-81 participates in a glycophospholipid binding. The chain crosses the membrane as a helical span at residues 102 to 131; it reads GESLRAVLAFIPAIGGVLAILPVYLLTREV. Residues 132–133 are Cytoplasmic-facing; sequence FD. A helical membrane pass occupies residues 134 to 153; it reads KRAAVIAAFLIAIVPGQFLQ. Residues 154–162 are Extracellular-facing; it reads RSILGFNDH. Residue Asp-161 participates in Mn(2+) binding. The DXD motif 2 signature appears at 161–163; the sequence is DHH. His-162 lines the a glycophospholipid pocket. His-163 serves as a coordination point for Mn(2+). Residues 163 to 184 form a helical membrane-spanning segment; that stretch reads HIWEAFWQVSALGTFLLAYNRW. Residues 185 to 199 are Cytoplasmic-facing; it reads KGHDLSHNLTARQMA. The chain crosses the membrane as a helical span at residues 200–212; it reads YPVIAGITIGLYV. The Extracellular portion of the chain corresponds to 213-215; the sequence is LSW. A helical membrane pass occupies residues 216 to 238; the sequence is GAGFIIAPIILAFMFFAFVLAGF. Over 239 to 241 the chain is Cytoplasmic; that stretch reads VNA. The helical transmembrane segment at 242-262 threads the bilayer; the sequence is DRKNLSLVAVVTFAVSALIYL. Over 263-279 the chain is Extracellular; the sequence is PFAFNYPGFSTIFYSPF. A helical transmembrane segment spans residues 280–303; the sequence is QLLVLLGSAVIAAAFYQIEKWNDV. Over 304-312 the chain is Cytoplasmic; the sequence is GFFERVGLG. Residues 313–330 form a helical membrane-spanning segment; that stretch reads RKGMPLAVIVLTALIMGL. Topologically, residues 331–373 are extracellular; that stretch reads FFVISPDFARNLLSVVRVVQPKGGALTIAEVYPFFFTHNGEFT. A TIXE motif motif is present at residues 357–360; it reads TIAE. Residues 374 to 396 form a helical membrane-spanning segment; it reads LTNAVLHFGALFFFGMAGILYSA. Over 397–404 the chain is Cytoplasmic; sequence YRFLKRRS. The helical transmembrane segment at 405–423 threads the bilayer; sequence FPEMALLIWAIAMFIALWG. At 424–427 the chain is on the extracellular side; sequence QNRF. Arg-426 lines the a glycophospholipid pocket. A helical transmembrane segment spans residues 428-452; the sequence is AYYFAAVSAVYSALALSVVFDKLHL. Residues 453 to 468 lie on the Cytoplasmic side of the membrane; sequence YRALENAIGARNKLSY. The chain crosses the membrane as a helical span at residues 469 to 494; the sequence is FRVAFALLIALAAIYPTYILADAQSS. Residues 495–868 lie on the Extracellular side of the membrane; it reads YAGGPNKQWY…QNGEIIQLDL (374 aa). The tract at residues 550-552 is interacts with target acceptor peptide in protein substrate; the sequence is WWD. The WWDYG motif signature appears at 550–554; that stretch reads WWDYG. A DKi motif motif is present at residues 613-622; the sequence is EMETGKYYAM.

Belongs to the STT3 family. Requires Mg(2+) as cofactor. It depends on Mn(2+) as a cofactor. Zn(2+) is required as a cofactor.

Its subcellular location is the cell membrane. The enzyme catalyses an archaeal dolichyl phosphooligosaccharide + [protein]-L-asparagine = an archaeal dolichyl phosphate + a glycoprotein with the oligosaccharide chain attached by N-beta-D-glycosyl linkage to a protein L-asparagine.. The protein operates within protein modification; protein glycosylation. Oligosaccharyl transferase (OST) that catalyzes the initial transfer of a defined glycan (a glucose-linked heptasaccharide composed of 3 Glc, 2 Man, 2 Gal and a sulfate for A.fulgidus AglB-L) from the lipid carrier dolichol-monophosphate to an asparagine residue within an Asn-X-Ser/Thr consensus motif in nascent polypeptide chains, the first step in protein N-glycosylation. The protein is Dolichyl-phosphooligosaccharide-protein glycotransferase 3 (aglB3) of Archaeoglobus fulgidus (strain ATCC 49558 / DSM 4304 / JCM 9628 / NBRC 100126 / VC-16).